We begin with the raw amino-acid sequence, 443 residues long: Xaa-Pro dipeptidase (443 aa).

D246, D257, H339, E384, and E423 together coordinate Mn(2+).

This sequence belongs to the peptidase M24B family. Bacterial-type prolidase subfamily. Mn(2+) serves as cofactor.

It catalyses the reaction Xaa-L-Pro dipeptide + H2O = an L-alpha-amino acid + L-proline. Splits dipeptides with a prolyl residue in the C-terminal position. This is Xaa-Pro dipeptidase from Escherichia coli O8 (strain IAI1).